The chain runs to 416 residues: Exodeoxyribonuclease 7 large subunit (416 aa).

Belongs to the XseA family. Heterooligomer composed of large and small subunits.

Its subcellular location is the cytoplasm. The catalysed reaction is Exonucleolytic cleavage in either 5'- to 3'- or 3'- to 5'-direction to yield nucleoside 5'-phosphates.. Its function is as follows. Bidirectionally degrades single-stranded DNA into large acid-insoluble oligonucleotides, which are then degraded further into small acid-soluble oligonucleotides. The chain is Exodeoxyribonuclease 7 large subunit from Nitratiruptor sp. (strain SB155-2).